The following is a 240-amino-acid chain: Adapter protein MecA (240 aa).

The segment at 118–138 is disordered; it reads EQRAQQQKHSHKSEQKQTKQR.

The protein belongs to the MecA family. Homodimer.

Enables the recognition and targeting of unfolded and aggregated proteins to the ClpC protease or to other proteins involved in proteolysis. In Staphylococcus haemolyticus (strain JCSC1435), this protein is Adapter protein MecA.